We begin with the raw amino-acid sequence, 259 residues long: Nodulation protein J (259 aa).

Positions 30–256 constitute an ABC transmembrane type-2 domain; sequence ASILGNLADP…LVSTALLRRR (227 aa). A run of 6 helical transmembrane segments spans residues 32–52, 64–84, 116–136, 141–161, 174–194, and 228–248; these read ILGN…GLGV, AFLA…FETI, AWAA…AAML, WLAL…FASL, YFIF…GAVF, and IANV…PFLV.

It belongs to the ABC-2 integral membrane protein family. Lipooligosaccharide exporter (TC 3.A.1.102) subfamily. The complex is composed of two ATP-binding proteins (NodI) and two transmembrane proteins (NodJ).

It localises to the cell inner membrane. In terms of biological role, part of the ABC transporter complex NodIJ involved in the export of the nodulation factors (Nod factors), the bacterial signal molecules that induce symbiosis and subsequent nodulation induction. Nod factors are LCO (lipo-chitin oligosaccharide), a modified beta-1,4-linked N-acetylglucosamine oligosaccharide. This subunit encodes the transporter. In Rhizobium leguminosarum bv. viciae, this protein is Nodulation protein J (nodJ).